A 90-amino-acid chain; its full sequence is Small ribosomal subunit protein uS15c (90 aa).

This sequence belongs to the universal ribosomal protein uS15 family. As to quaternary structure, part of the 30S ribosomal subunit.

Its subcellular location is the plastid. The protein resides in the chloroplast. The chain is Small ribosomal subunit protein uS15c (rps15-A) from Pelargonium hortorum (Common geranium).